Consider the following 176-residue polypeptide: Secreted LysM effector ELP2 (176 aa).

The first 18 residues, 1 to 18 (MQFSIFTVLAAAASFAVA), serve as a signal peptide directing secretion. The span at 31-45 (TSAAANPSPTTSGAA) shows a compositional bias: low complexity. A disordered region spans residues 31–50 (TSAAANPSPTTSGAANPSPT). Residues 58–102 (HKTTVKAGQTLTTIAERFHSGICDIAWQNKLENPNVIFVGQVLLV) form the LysM 1 domain. Residue asparagine 111 is glycosylated (N-linked (GlcNAc...) asparagine). Residues 129 to 173 (ATYTIKSGDTFFAVAQSLGITTDSLTGANPGVVPENLQIDQVINV) enclose the LysM 2 domain.

This sequence belongs to the secreted LysM effector family. In terms of assembly, forms homodimers in a chitin-independent manner through interactions at the N-termini of EPL2 monomers. Homodimers are further polymerized in a chitin-dependent manner.

It localises to the secreted. Secreted effector that enables the plant pathogenic fungus to manipulate host defenses for successful infection. Binds chitin oligomers and polymer with high affinity and plays a dual role, not only in the suppression of chitin-triggered immune responses, but also in appressorium function. Does not protect fungal hyphae against plant chitinases but suppresses chitin-triggered plant immune responses. Chitin-induced polymerization of homodimers forms a contiguous ELP2 highly oligomeric super-complexe that may precipitate at infection sites to eliminate chitin oligomers, and thus suppress the activation of chitin-induced plant immunity. This is Secreted LysM effector ELP2 from Colletotrichum higginsianum (strain IMI 349063) (Crucifer anthracnose fungus).